The chain runs to 490 residues: MPTFSLVAYPRGCGAGSQEIMTEKKTVITRFAPSPTGYLHIGGARTALFNWLFARHHGGQFLLRIEDTDRERSTTPAIDAIFEGLQWLGLSWDAEPVFQASRAARHVEAVQELLDRGKAYHCYASQQELEEMREKARAEGRPIHYDGRWRDRDPAEAPAGVRPVVRFRSPNDGETIVRDHVMGDVRFPNEQLDDLILLRSDGTPTYNLSVVVDDHDMSITHIIRGDDHLTNAARQSQIYEALGWEVPEFAHVPLIHGPDGAKLSKRHGALGAEAYRDLGYLPEAMRNYLVRLGWSHGDDELFSTEQAIEWFNLESIGRSPARFDFAKLENLNGHYIREADDERLADETIALMTRNEGWKTDDEFRKKLIALMPGLKERAKTLVEIGKGAAFLLVHRPLTCDDKALQLLNPEARALLARLVSRLEARNDWILSEIETTVRAFAEEENLKLGKVAQPLRAAVTGSTVSPPIFDVLATLGRDEALGRIKDQAA.

A 'HIGH' region motif is present at residues 33-43 (PSPTGYLHIGG). A 'KMSKS' region motif is present at residues 262–266 (KLSKR). Residue K265 participates in ATP binding.

Belongs to the class-I aminoacyl-tRNA synthetase family. Glutamate--tRNA ligase type 1 subfamily. As to quaternary structure, monomer.

The protein localises to the cytoplasm. It carries out the reaction tRNA(Glu) + L-glutamate + ATP = L-glutamyl-tRNA(Glu) + AMP + diphosphate. Catalyzes the attachment of glutamate to tRNA(Glu) in a two-step reaction: glutamate is first activated by ATP to form Glu-AMP and then transferred to the acceptor end of tRNA(Glu). The sequence is that of Glutamate--tRNA ligase 2 from Parvibaculum lavamentivorans (strain DS-1 / DSM 13023 / NCIMB 13966).